The following is a 4561-amino-acid chain: StAR-related lipid transfer protein 9 (4561 aa).

The region spanning N3–I384 is the Kinesin motor domain. G103–T110 serves as a coordination point for ATP. Low complexity predominate over residues S307 to A321. The disordered stretch occupies residues S307 to R330. The region spanning T482–V533 is the FHA domain. 3 disordered regions span residues S784–R805, S873–S1064, and W1092–S1153. 4 stretches are compositionally biased toward polar residues: residues W789–R805, A884–I903, C911–T920, and R939–G948. 2 stretches are compositionally biased toward basic and acidic residues: residues R1046–S1060 and S1124–H1135. Residue S1164 is modified to Phosphoserine. Disordered stretches follow at residues P1288 to S1392, R1700 to N1767, E1959 to Q1980, T2077 to L2120, L2320 to S2356, V2384 to D2427, F2439 to S2467, K2622 to P2656, K2712 to I2735, T2777 to G2800, R3002 to L3067, A3185 to L3207, E3246 to K3286, E3645 to E3703, S3790 to S3847, and Q3863 to T3913. The segment covering D1300–K1321 has biased composition (basic and acidic residues). Polar residues-rich tracts occupy residues L1328–L1360 and P1722–K1741. Basic and acidic residues-rich tracts occupy residues E1754–N1767 and Q1970–Q1980. Over residues T2077–T2091 the composition is skewed to polar residues. Positions R2096–H2110 are enriched in basic and acidic residues. Polar residues-rich tracts occupy residues T2333 to T2351 and T2399 to A2408. Residues E2414 to Q2463 are a coiled coil. Positions V2417–D2427 are enriched in basic and acidic residues. Over residues D2634–R2647 the composition is skewed to basic and acidic residues. 2 stretches are compositionally biased toward polar residues: residues L3039 to M3054 and T3187 to Q3199. The span at P3689 to L3700 shows a compositional bias: pro residues. Residues D3812 to L3835 are compositionally biased toward basic and acidic residues. Residues Q3863 to L3874 show a composition bias toward polar residues. A coiled-coil region spans residues S4185–R4224. The 218-residue stretch at P4344–S4561 folds into the START domain.

It belongs to the TRAFAC class myosin-kinesin ATPase superfamily. Kinesin family. In terms of assembly, interacts with ATAD3A.

It is found in the cytoplasm. The protein resides in the cytoskeleton. Its subcellular location is the microtubule organizing center. It localises to the centrosome. The protein localises to the centriole. It is found in the nucleus. Functionally, microtubule-dependent motor protein required for spindle pole assembly during mitosis. Required to stabilize the pericentriolar material (PCM). This chain is StAR-related lipid transfer protein 9 (Stard9), found in Mus musculus (Mouse).